Here is a 430-residue protein sequence, read N- to C-terminus: Lipoyl synthase, mitochondrial (430 aa).

A mitochondrion-targeting transit peptide spans 1–37 (MAASTGKLRTLFSAHSSLSARPSSALPALRLTILRSY). A compositionally biased stretch (low complexity) spans 40–56 (TTPPDSSISDPSNSSTT). The tract at residues 40 to 63 (TTPPDSSISDPSNSSTTVKRPPTA) is disordered. [4Fe-4S] cluster-binding residues include cysteine 141, cysteine 146, cysteine 152, cysteine 172, cysteine 176, cysteine 179, and serine 387. In terms of domain architecture, Radical SAM core spans 155–376 (GSSKSAATAT…KERALEMGFL (222 aa)).

The protein belongs to the radical SAM superfamily. Lipoyl synthase family. [4Fe-4S] cluster is required as a cofactor.

The protein localises to the mitochondrion. The catalysed reaction is [[Fe-S] cluster scaffold protein carrying a second [4Fe-4S](2+) cluster] + N(6)-octanoyl-L-lysyl-[protein] + 2 oxidized [2Fe-2S]-[ferredoxin] + 2 S-adenosyl-L-methionine + 4 H(+) = [[Fe-S] cluster scaffold protein] + N(6)-[(R)-dihydrolipoyl]-L-lysyl-[protein] + 4 Fe(3+) + 2 hydrogen sulfide + 2 5'-deoxyadenosine + 2 L-methionine + 2 reduced [2Fe-2S]-[ferredoxin]. It functions in the pathway protein modification; protein lipoylation via endogenous pathway; protein N(6)-(lipoyl)lysine from octanoyl-[acyl-carrier-protein]: step 2/2. Functionally, catalyzes the radical-mediated insertion of two sulfur atoms into the C-6 and C-8 positions of the octanoyl moiety bound to the lipoyl domains of lipoate-dependent enzymes, thereby converting the octanoylated domains into lipoylated derivatives. The polypeptide is Lipoyl synthase, mitochondrial (Ajellomyces dermatitidis (strain ER-3 / ATCC MYA-2586) (Blastomyces dermatitidis)).